The primary structure comprises 188 residues: Elongation factor P (188 aa).

Belongs to the elongation factor P family.

It is found in the cytoplasm. It functions in the pathway protein biosynthesis; polypeptide chain elongation. Functionally, involved in peptide bond synthesis. Stimulates efficient translation and peptide-bond synthesis on native or reconstituted 70S ribosomes in vitro. Probably functions indirectly by altering the affinity of the ribosome for aminoacyl-tRNA, thus increasing their reactivity as acceptors for peptidyl transferase. This Sulfurimonas denitrificans (strain ATCC 33889 / DSM 1251) (Thiomicrospira denitrificans (strain ATCC 33889 / DSM 1251)) protein is Elongation factor P.